The sequence spans 78 residues: Acyl carrier protein (78 aa).

A Carrier domain is found at 2-77 (STIEERVKKI…EAIDYINAHA (76 aa)). An O-(pantetheine 4'-phosphoryl)serine modification is found at S37.

This sequence belongs to the acyl carrier protein (ACP) family. Post-translationally, 4'-phosphopantetheine is transferred from CoA to a specific serine of apo-ACP by AcpS. This modification is essential for activity because fatty acids are bound in thioester linkage to the sulfhydryl of the prosthetic group.

It localises to the cytoplasm. It participates in lipid metabolism; fatty acid biosynthesis. Its function is as follows. Carrier of the growing fatty acid chain in fatty acid biosynthesis. The sequence is that of Acyl carrier protein from Stutzerimonas stutzeri (strain A1501) (Pseudomonas stutzeri).